The following is a 738-amino-acid chain: 1,4-alpha-glucan branching enzyme GlgB (738 aa).

Aspartate 417 functions as the Nucleophile in the catalytic mechanism. Glutamate 472 acts as the Proton donor in catalysis.

It belongs to the glycosyl hydrolase 13 family. GlgB subfamily. In terms of assembly, monomer.

The enzyme catalyses Transfers a segment of a (1-&gt;4)-alpha-D-glucan chain to a primary hydroxy group in a similar glucan chain.. The protein operates within glycan biosynthesis; glycogen biosynthesis. Its function is as follows. Catalyzes the formation of the alpha-1,6-glucosidic linkages in glycogen by scission of a 1,4-alpha-linked oligosaccharide from growing alpha-1,4-glucan chains and the subsequent attachment of the oligosaccharide to the alpha-1,6 position. The polypeptide is 1,4-alpha-glucan branching enzyme GlgB (Burkholderia pseudomallei (strain K96243)).